We begin with the raw amino-acid sequence, 166 residues long: Interleukin-3 (166 aa).

An N-terminal signal peptide occupies residues 1–26 (MVLASSTTSIHTMLLLLLMLFHLGLQ). N-linked (GlcNAc...) asparagine glycosylation occurs at Asn42. 2 disulfide bridges follow: Cys43–Cys106 and Cys105–Cys166. Residue Asn112 is glycosylated (N-linked (GlcNAc...) asparagine; partial). The disordered stretch occupies residues 145–166 (LTSRPPQPASGSVSPNRGTVEC).

This sequence belongs to the IL-3 family. In terms of assembly, monomer. As to expression, activated T-cells, mast cells, natural killer cells.

It is found in the secreted. Its function is as follows. Cytokine secreted predominantly by activated T-lymphocytes as well as mast cells and osteoblastic cells that controls the production and differentiation of hematopoietic progenitor cells into lineage-restricted cells. Also stimulates mature basophils, eosinophils, and monocytes to become functionally activated. In addition, plays an important role in neural cell proliferation and survival. Participates as well in bone homeostasis and inhibits osteoclast differentiation by preventing NF-kappa-B nuclear translocation and activation. Mechanistically, exerts its biological effects through a receptor composed of IL3RA subunit and a signal transducing subunit IL3RB. Receptor stimulation results in the rapid activation of JAK2 kinase activity leading to STAT5-mediated transcriptional program. Alternatively, contributes to cell survival under oxidative stress in non-hematopoietic systems by activating pathways mediated by PI3K/AKT and ERK. This Mus musculus (Mouse) protein is Interleukin-3 (Il3).